The following is an 804-amino-acid chain: Ral guanine nucleotide dissociation stimulator-like 1 (804 aa).

The N-terminal Ras-GEF domain maps to 101 to 231 (KIRSIRAGTL…RAQSLLEQLR (131 aa)). One can recognise a Ras-GEF domain in the interval 270-539 (EVDLVAEQLT…YVLSCEVEGL (270 aa)). Disordered stretches follow at residues 564–611 (NDST…TPTH) and 640–676 (SASI…GFPP). Composition is skewed to low complexity over residues 581–607 (PTGS…SDGM) and 640–649 (SASISLASPT). Residues 661–671 (ISLTPLMSPTS) are compositionally biased toward polar residues. Positions 684–771 (DACIIRVSLE…FDFLLRLRGS (88 aa)) constitute a Ras-associating domain.

In terms of biological role, probable guanine nucleotide exchange factor. In Danio rerio (Zebrafish), this protein is Ral guanine nucleotide dissociation stimulator-like 1 (rgl1).